The sequence spans 192 residues: Superoxide dismutase [Fe] (192 aa).

Positions 26, 73, 157, and 161 each coordinate Fe cation.

This sequence belongs to the iron/manganese superoxide dismutase family. In terms of assembly, homodimer. Fe cation is required as a cofactor.

It carries out the reaction 2 superoxide + 2 H(+) = H2O2 + O2. Functionally, destroys superoxide anion radicals which are normally produced within the cells and which are toxic to biological systems. This Pseudoalteromonas translucida (strain TAC 125) protein is Superoxide dismutase [Fe].